The chain runs to 658 residues: MKKQIISLGALAVASSLFTWDNKADAIVTKDYSKESRVNEKSKKGATVSDYYYWKIIDSLEAQFTGAIDLLENYKYGDPIYKEAKDRLMTRVLGEDQYLLKKKIDEYELYKKWYKSSNKNTNMLTFHKYNLYNLTMNEYNDIFNSLKDAVYQFNKEVKEIEHKNVDLKQFDKDGEDKATKEVYDLVSEIDTLVVTYYADKDYGEHAKELRAKLDLILGDTDNPHKITNERIKKEMIDDLNSIIDDFFMETKQNRPNSITKYDPTKHNFKEKSENKPNFDKLVEETKKAVKEADESWKNKTVKKYEETVTKSPVVKEEKKVEEPQLPKVGNQQEVKTTAGKAEETTQPVAQPLVKIPQETIYGETVKGPEYPTMENKTLQGEIVQGPDFLTMEQNRPSLSDNYTQPTTPNPILEGLEGSSSKLEIKPQGTESTLKGIQGESSDIEVKPQATETTEASQYGPRPQFNKTPKYVKYRDAGTGIREYNDGTFGYEARPRFNKPSETNAYNVTTNQDGTVSYGARPTQNKPSETNAYNVTTHANGQVSYGARPTQNKPSKTNAYNVTTHANGQVSYGARPTQKKPSKTNAYNVTTHANGQVSYGARPTYKKPSETNAYNVTTHANGQVSYGARPTQKKPSETNAYNVTTHADGTATYGPRVTK.

Residues Met1–Ala26 form the signal peptide. Composition is skewed to polar residues over residues Met391–Thr406, Gly428–Ser440, Pro499–Thr514, and Pro521–Ala531. Residues Met391–Ala531 are disordered. 6 tandem repeats follow at residues Ala492 to Gly518, Ala519 to Gly545, Ala546 to Gly572, Ala573 to Gly599, Ala600 to Gly626, and Ala627 to Gly653. Residues Ala492–Gly653 are 6 X 27 AA tandem repeats of A-R-P-[RT]-[FQY]-[NK]-K-P-S-[EK]-T-N-A-Y-N-V-T-T-[NH]-[QA]-[DN]-G-[TQ]-[VA]-[ST]-Y-G. Residues Ala619–Lys658 are disordered. Residues Glu636–Ala646 are compositionally biased toward polar residues.

This sequence belongs to the staphylocoagulase family.

Functionally, staphylocoagulase is an extracellular protein which specifically forms a complex with human prothrombin. This complex named staphylothrombin can clot fibrinogen without any proteolytic cleavage of prothrombin. This is Staphylocoagulase from Staphylococcus aureus.